The primary structure comprises 332 residues: Polygalacturonase inhibitor 1 (332 aa).

The signal sequence occupies residues 1 to 24 (MASTASFMLAVLLAVAVAAAPARA). Intrachain disulfides connect cysteine 27/cysteine 58 and cysteine 59/cysteine 66. LRR repeat units follow at residues 72 to 96 (VNNV…GLTA), 97 to 118 (LMSL…CLTA), 119 to 142 (LSNL…SLAR), 143 to 166 (IRSL…SFSD), 167 to 192 (LPNL…VQGQ), 193 to 215 (FRSL…AQDE), 216 to 236 (INTV…LFAA), 237 to 259 (GRPI…KLVF), 260 to 283 (PPEL…SLAA), and 284 to 310 (LSTL…VIRH). Asparagine 131 carries an N-linked (GlcNAc...) asparagine glycan. 3 cysteine pairs are disulfide-bonded: cysteine 298/cysteine 312, cysteine 298/cysteine 320, and cysteine 320/cysteine 329.

It belongs to the polygalacturonase-inhibiting protein family. Highly expressed in calli, immature and mature panicles, and in three inner floral organs: lodicules, stamens and carpels. Expressed at low level in seedling roots and mature stems.

The protein localises to the secreted. Its subcellular location is the cell wall. Its function is as follows. Inhibitor of fungal polygalacturonase. Regulates floral organ number. The polypeptide is Polygalacturonase inhibitor 1 (Oryza sativa subsp. japonica (Rice)).